Consider the following 78-residue polypeptide: Alpha-neurotoxin homolog 7 (78 aa).

The first 21 residues, 1 to 21, serve as a signal peptide directing secretion; the sequence is MKTLLLTLVVVTIVCLDFGYT. Disulfide bonds link C24-C42, C37-C57, C59-C70, and C71-C76.

The protein belongs to the three-finger toxin family. Short-chain subfamily. Orphan group XII sub-subfamily. In terms of tissue distribution, expressed by the venom gland.

The protein resides in the secreted. The polypeptide is Alpha-neurotoxin homolog 7 (Micrurus corallinus (Brazilian coral snake)).